The primary structure comprises 128 residues: MNVYIPILVLAALAAAFAVVSVVIASLVGPSRFNRSKQAAYECGIEPASTGARTSIGPGAASGQRFPIKYYLTAMLFIVFDIEIVFLYPWAVSYDSLGTFALVEMAIFMLTVFVAYAYVWRRGGLTWD.

Transmembrane regions (helical) follow at residues 5 to 25 (IPIL…VVIA), 72 to 92 (LTAM…PWAV), and 100 to 120 (FALV…AYVW).

The protein belongs to the complex I subunit 3 family. NDH-1 is composed of 14 different subunits. Subunits NuoA, H, J, K, L, M, N constitute the membrane sector of the complex.

It localises to the cell membrane. The catalysed reaction is a quinone + NADH + 5 H(+)(in) = a quinol + NAD(+) + 4 H(+)(out). NDH-1 shuttles electrons from NADH, via FMN and iron-sulfur (Fe-S) centers, to quinones in the respiratory chain. The immediate electron acceptor for the enzyme in this species is believed to be a menaquinone. Couples the redox reaction to proton translocation (for every two electrons transferred, four hydrogen ions are translocated across the cytoplasmic membrane), and thus conserves the redox energy in a proton gradient. The protein is NADH-quinone oxidoreductase subunit A of Mycobacterium bovis (strain ATCC BAA-935 / AF2122/97).